We begin with the raw amino-acid sequence, 437 residues long: Zinc finger CCCH domain-containing protein 40 (437 aa).

A C3H1-type zinc finger spans residues 6–33 (MYKTKLCILFNKTGDCSRPNCTFAHGNA). A disordered region spans residues 35–107 (LRRPGESSFT…MPFENRRDKD (73 aa)). The segment covering 48–85 (HNMDSDLRDRRHNMDSDLRDRLGRQFSPERRPSLDRSG) has biased composition (basic and acidic residues). Residues 145-244 (NNVLEEQLKD…LGNQLSTYLA (100 aa)) are a coiled coil. Ser259 is subject to Phosphoserine. 2 disordered regions span residues 266–360 (RNLR…RRRF) and 380–437 (EFDD…DDSV). Positions 307–319 (RGEEEKVENEKKR) are enriched in basic and acidic residues. Acidic residues-rich tracts occupy residues 333-343 (EEESGAWNDED) and 383-392 (DVAESEEENP). Over residues 426–437 (MEQKKAYDDDSV) the composition is skewed to basic and acidic residues.

The sequence is that of Zinc finger CCCH domain-containing protein 40 from Arabidopsis thaliana (Mouse-ear cress).